Here is a 689-residue protein sequence, read N- to C-terminus: Potassium-transporting ATPase ATP-binding subunit (689 aa).

The next 4 membrane-spanning stretches (helical) occupy residues 35 to 55 (VMFVVYIGSILTTAIWLAILA), 62 to 82 (AAFTGSIAMWLWFTVLFANFA), 220 to 240 (ALTILLVALTLVFVLATATLF), and 260 to 280 (VLVALLVCLIPTTIGGLLSAI). D313 serves as the catalytic 4-aspartylphosphate intermediate. ATP-binding positions include D350, E354, 383–390 (FSAQTRMS), and K401. D524 and D528 together coordinate Mg(2+). Helical transmembrane passes span 594-614 (FAIIPAAFAATYPQLNALNVM), 622-642 (AIMSAVIFNALVIVFLIPLAL), and 665-685 (VGGLLVPFVGIKLIDLLLVAL).

Belongs to the cation transport ATPase (P-type) (TC 3.A.3) family. Type IA subfamily. As to quaternary structure, the system is composed of three essential subunits: KdpA, KdpB and KdpC.

The protein localises to the cell inner membrane. The enzyme catalyses K(+)(out) + ATP + H2O = K(+)(in) + ADP + phosphate + H(+). Part of the high-affinity ATP-driven potassium transport (or Kdp) system, which catalyzes the hydrolysis of ATP coupled with the electrogenic transport of potassium into the cytoplasm. This subunit is responsible for energy coupling to the transport system and for the release of the potassium ions to the cytoplasm. The polypeptide is Potassium-transporting ATPase ATP-binding subunit (Serratia proteamaculans (strain 568)).